Consider the following 316-residue polypeptide: Cysteine synthase (316 aa).

Asparagine 7 and arginine 35 together coordinate hydrogen sulfide. Residue lysine 42 is modified to N6-(pyridoxal phosphate)lysine. Residues asparagine 72 and 177-181 each bind pyridoxal 5'-phosphate; that span reads GTGGS. Leucine 268 serves as a coordination point for hydrogen sulfide. Serine 272 lines the pyridoxal 5'-phosphate pocket.

Belongs to the cysteine synthase/cystathionine beta-synthase family. As to quaternary structure, homodimer. Pyridoxal 5'-phosphate is required as a cofactor.

The enzyme catalyses O-acetyl-L-serine + hydrogen sulfide = L-cysteine + acetate. The protein operates within amino-acid biosynthesis; L-cysteine biosynthesis; L-cysteine from L-serine: step 2/2. This is Cysteine synthase (cysK) from Haemophilus influenzae (strain ATCC 51907 / DSM 11121 / KW20 / Rd).